Consider the following 429-residue polypeptide: Adenylosuccinate synthetase (429 aa).

GTP is bound by residues 12–18 (GDEGKGK) and 40–42 (GHT). Asp13 acts as the Proton acceptor in catalysis. Residues Asp13 and Gly40 each coordinate Mg(2+). Residues 13–16 (DEGK), 38–41 (NAGH), Thr128, Arg142, Gln223, Thr238, and Arg302 each bind IMP. The Proton donor role is filled by His41. 298 to 304 (VNTGRPR) contacts substrate. GTP-binding positions include Arg304, 330 to 332 (KLD), and 412 to 414 (GVG).

This sequence belongs to the adenylosuccinate synthetase family. In terms of assembly, homodimer. Requires Mg(2+) as cofactor.

The protein resides in the cytoplasm. It carries out the reaction IMP + L-aspartate + GTP = N(6)-(1,2-dicarboxyethyl)-AMP + GDP + phosphate + 2 H(+). The protein operates within purine metabolism; AMP biosynthesis via de novo pathway; AMP from IMP: step 1/2. In terms of biological role, plays an important role in the de novo pathway of purine nucleotide biosynthesis. Catalyzes the first committed step in the biosynthesis of AMP from IMP. This Micrococcus luteus (strain ATCC 4698 / DSM 20030 / JCM 1464 / CCM 169 / CCUG 5858 / IAM 1056 / NBRC 3333 / NCIMB 9278 / NCTC 2665 / VKM Ac-2230) (Micrococcus lysodeikticus) protein is Adenylosuccinate synthetase.